The following is a 451-amino-acid chain: UPF0210 protein NGO_1297 (451 aa).

It belongs to the UPF0210 family. In terms of assembly, homodimer.

The chain is UPF0210 protein NGO_1297 from Neisseria gonorrhoeae (strain ATCC 700825 / FA 1090).